We begin with the raw amino-acid sequence, 180 residues long: Adenine phosphoribosyltransferase (180 aa).

The protein belongs to the purine/pyrimidine phosphoribosyltransferase family. In terms of assembly, homodimer.

The protein localises to the cytoplasm. The enzyme catalyses AMP + diphosphate = 5-phospho-alpha-D-ribose 1-diphosphate + adenine. It participates in purine metabolism; AMP biosynthesis via salvage pathway; AMP from adenine: step 1/1. Functionally, catalyzes a salvage reaction resulting in the formation of AMP, that is energically less costly than de novo synthesis. This is Adenine phosphoribosyltransferase from Marinobacter nauticus (strain ATCC 700491 / DSM 11845 / VT8) (Marinobacter aquaeolei).